A 188-amino-acid polypeptide reads, in one-letter code: Elongation factor P (188 aa).

Belongs to the elongation factor P family.

It localises to the cytoplasm. It functions in the pathway protein biosynthesis; polypeptide chain elongation. Functionally, involved in peptide bond synthesis. Stimulates efficient translation and peptide-bond synthesis on native or reconstituted 70S ribosomes in vitro. Probably functions indirectly by altering the affinity of the ribosome for aminoacyl-tRNA, thus increasing their reactivity as acceptors for peptidyl transferase. The polypeptide is Elongation factor P (Leptospira borgpetersenii serovar Hardjo-bovis (strain JB197)).